Here is a 197-residue protein sequence, read N- to C-terminus: Dephospho-CoA kinase (197 aa).

The 196-residue stretch at 2-197 (IIGITGGIAS…SALLLLANPR (196 aa)) folds into the DPCK domain. 10-15 (ASGKST) serves as a coordination point for ATP.

This sequence belongs to the CoaE family.

The protein resides in the cytoplasm. It carries out the reaction 3'-dephospho-CoA + ATP = ADP + CoA + H(+). It functions in the pathway cofactor biosynthesis; coenzyme A biosynthesis; CoA from (R)-pantothenate: step 5/5. Its function is as follows. Catalyzes the phosphorylation of the 3'-hydroxyl group of dephosphocoenzyme A to form coenzyme A. The polypeptide is Dephospho-CoA kinase (Streptococcus pyogenes serotype M1).